The primary structure comprises 232 residues: MTNYREIAWQGLWKNNPGLVQLLGLCPLLAVTATITNALGLGLATMLVLIGSNILVSLVRDYVPKEIRIPVFVMIIAALVTTVQLLINAYAYGLYLSLGIFLPLIVTNCIIIGRAEAFASRNNAFSAAFDGLMMGLGFTLVLTVLGATREILGQGTLFDGADQLLGPWAKSLTIHLWQVDTPFLLAMLPPGAFIVMGLLIALKNVIDKKVKERQPQVAAEPSVTRARITKVG.

6 consecutive transmembrane segments (helical) span residues 18–38, 39–59, 69–89, 93–113, 127–147, and 182–202; these read GLVQLLGLCPLLAVTATITNA, LGLGLATMLVLIGSNILVSLV, IPVFVMIIAALVTTVQLLINA, GLYLSLGIFLPLIVTNCIIIG, AAFDGLMMGLGFTLVLTVLGA, and PFLLAMLPPGAFIVMGLLIAL.

It belongs to the NqrDE/RnfAE family. As to quaternary structure, the complex is composed of six subunits: RnfA, RnfB, RnfC, RnfD, RnfE and RnfG.

The protein resides in the cell inner membrane. Part of a membrane-bound complex that couples electron transfer with translocation of ions across the membrane. The chain is Ion-translocating oxidoreductase complex subunit E from Shewanella baltica (strain OS185).